Here is a 369-residue protein sequence, read N- to C-terminus: Type 2 DNA topoisomerase 6 subunit A (369 aa).

A Topo IIA-type catalytic domain is found at 11 to 149 (KGDALAREKL…FHMRPEEDGA (139 aa)). Tyrosine 106 functions as the O-(5'-phospho-DNA)-tyrosine intermediate in the catalytic mechanism. Positions 202 and 254 each coordinate Mg(2+).

This sequence belongs to the TOP6A family. In terms of assembly, homodimer. Heterotetramer of two Top6A and two Top6B chains. Mg(2+) serves as cofactor.

The catalysed reaction is ATP-dependent breakage, passage and rejoining of double-stranded DNA.. Relaxes both positive and negative superturns and exhibits a strong decatenase activity. This chain is Type 2 DNA topoisomerase 6 subunit A, found in Methanosarcina mazei (strain ATCC BAA-159 / DSM 3647 / Goe1 / Go1 / JCM 11833 / OCM 88) (Methanosarcina frisia).